The chain runs to 391 residues: UPF0229 protein CLL_A3091 (391 aa).

Disordered regions lie at residues 1 to 23 (MAIF…DKRR) and 75 to 107 (VATG…GNEE). Positions 80–92 (GEEKRGDKIESGS) are enriched in basic and acidic residues.

The protein belongs to the UPF0229 family.

The chain is UPF0229 protein CLL_A3091 from Clostridium botulinum (strain Eklund 17B / Type B).